The primary structure comprises 278 residues: Potassium/proton antiporter CemA (278 aa).

The next 4 helical transmembrane spans lie at 61–81, 154–174, 203–223, and 238–258; these read VVFL…FLFG, CAIT…SILI, IILF…EVII, and FIFV…KYWI.

It belongs to the CemA family.

The protein resides in the plastid. It localises to the chloroplast inner membrane. It catalyses the reaction K(+)(in) + H(+)(out) = K(+)(out) + H(+)(in). In terms of biological role, contributes to K(+)/H(+) antiport activity by supporting proton efflux to control proton extrusion and homeostasis in chloroplasts in a light-dependent manner to modulate photosynthesis. Prevents excessive induction of non-photochemical quenching (NPQ) under continuous-light conditions. Indirectly promotes efficient inorganic carbon uptake into chloroplasts. The sequence is that of Potassium/proton antiporter CemA from Gracilaria tenuistipitata var. liui (Red alga).